A 409-amino-acid chain; its full sequence is Phosphoglycerate kinase (409 aa).

Substrate is bound by residues 23-25 (DIN), 63-66 (HQSR), Arg-120, and Arg-160. ATP contacts are provided by residues Glu-333 and 359–362 (GGHL).

Belongs to the phosphoglycerate kinase family. Monomer.

The protein resides in the cytoplasm. The catalysed reaction is (2R)-3-phosphoglycerate + ATP = (2R)-3-phospho-glyceroyl phosphate + ADP. It participates in carbohydrate degradation; glycolysis; pyruvate from D-glyceraldehyde 3-phosphate: step 2/5. The protein is Phosphoglycerate kinase (pgk) of Methanobacterium bryantii.